We begin with the raw amino-acid sequence, 311 residues long: Methionyl-tRNA formyltransferase (311 aa).

112 to 115 contributes to the (6S)-5,6,7,8-tetrahydrofolate binding site; sequence SLLP.

The protein belongs to the Fmt family.

The enzyme catalyses L-methionyl-tRNA(fMet) + (6R)-10-formyltetrahydrofolate = N-formyl-L-methionyl-tRNA(fMet) + (6S)-5,6,7,8-tetrahydrofolate + H(+). Attaches a formyl group to the free amino group of methionyl-tRNA(fMet). The formyl group appears to play a dual role in the initiator identity of N-formylmethionyl-tRNA by promoting its recognition by IF2 and preventing the misappropriation of this tRNA by the elongation apparatus. This is Methionyl-tRNA formyltransferase from Rhizobium leguminosarum bv. trifolii (strain WSM2304).